Here is a 277-residue protein sequence, read N- to C-terminus: Undecaprenyl-diphosphatase 1 (277 aa).

The next 8 helical transmembrane spans lie at 1 to 21, 39 to 58, 85 to 105, 113 to 133, 147 to 167, 191 to 211, 226 to 246, and 251 to 271; these read MSLLEAVILGLVQGITEFLPI, AGFSFEILLHLASVLAVILY, FWFAIYLVVATGITGVAGILF, FKAPIFIALALAVTGLFLIII, MTIWDSIIVGLGQCLALIPGL, SFLLSIPVILGSSVLAIDDLI, ASFVVTFIASWLGIVFFLNLV, and LVYFAVYCFIVAILVFIFQDA.

Belongs to the UppP family.

It localises to the cell membrane. It catalyses the reaction di-trans,octa-cis-undecaprenyl diphosphate + H2O = di-trans,octa-cis-undecaprenyl phosphate + phosphate + H(+). Catalyzes the dephosphorylation of undecaprenyl diphosphate (UPP). Confers resistance to bacitracin. This chain is Undecaprenyl-diphosphatase 1, found in Shouchella clausii (strain KSM-K16) (Alkalihalobacillus clausii).